A 215-amino-acid polypeptide reads, in one-letter code: Lysozyme-like protein 5 (215 aa).

A signal peptide spans 1 to 17 (MKHFFITILLFCSVVSA). Residues 18 to 215 (ARNGIDINSP…GVSVDMNYIP (198 aa)) form the Ch-type lysozyme domain. Residues aspartate 23, aspartate 113, and glutamate 115 contribute to the active site.

Belongs to the glycosyl hydrolase 25 family.

In terms of biological role, plays a role in resistance to Gram-positive bacteria S.aureus or B.thuringiensis infection. This Caenorhabditis elegans protein is Lysozyme-like protein 5.